Here is a 244-residue protein sequence, read N- to C-terminus: Ribonuclease 3 (244 aa).

The RNase III domain maps to 21–148; that stretch reads DHAPLLEAWG…MLGAIYLHHG (128 aa). Position 61 (E61) interacts with Mg(2+). The active site involves D65. Residues D134 and E137 each coordinate Mg(2+). E137 is a catalytic residue. Positions 175 to 242 constitute a DRBM domain; sequence DWKTVLLEKL…AKQAVQKLNE (68 aa).

The protein belongs to the ribonuclease III family. Homodimer. The cofactor is Mg(2+).

Its subcellular location is the cytoplasm. It carries out the reaction Endonucleolytic cleavage to 5'-phosphomonoester.. In terms of biological role, digests double-stranded RNA. Involved in the processing of primary rRNA transcript to yield the immediate precursors to the large and small rRNAs (23S and 16S). Processes some mRNAs, and tRNAs when they are encoded in the rRNA operon. Processes pre-crRNA and tracrRNA of type II CRISPR loci if present in the organism. The chain is Ribonuclease 3 from Corynebacterium jeikeium (strain K411).